The following is a 326-amino-acid chain: Protein BugT (326 aa).

Residues 1 to 25 (MNMTRLLAVIGIFIATAGIAAPVSA) form the signal peptide.

Belongs to the UPF0065 (bug) family.

It is found in the periplasm. This is Protein BugT (bugT) from Bordetella pertussis (strain Tohama I / ATCC BAA-589 / NCTC 13251).